The chain runs to 872 residues: FHIP family protein CBG19667 (872 aa).

The interval 800–841 is disordered; it reads SRSSPRSADEHDSTLFYGRSTIPPPGRKPLLREPSHQETLDD. Over residues 829-841 the composition is skewed to basic and acidic residues; it reads LLREPSHQETLDD.

It belongs to the FHIP family.

In Caenorhabditis briggsae, this protein is FHIP family protein CBG19667.